The chain runs to 147 residues: Hemoglobin subunit gamma (147 aa).

One can recognise a Globin domain in the interval 3–147 (HFTAEEKAAI…VANALAYKYH (145 aa)). Heme b contacts are provided by H64 and H93.

The protein belongs to the globin family. In terms of assembly, heterotetramer of two alpha chains and two gamma chains in fetal hemoglobin (Hb F). Red blood cells.

Gamma chains make up the fetal hemoglobin F, in combination with alpha chains. The polypeptide is Hemoglobin subunit gamma (HBG) (Loxodonta africana (African elephant)).